Consider the following 287-residue polypeptide: Phosphatidylglycerol--prolipoprotein diacylglyceryl transferase (287 aa).

4 helical membrane-spanning segments follow: residues 15 to 35, 55 to 75, 90 to 110, and 117 to 137; these read IGPL…ILAI, FVMF…VFFE, IWEG…TAIV, and VSFW…QAIG. Arg138 provides a ligand contact to a 1,2-diacyl-sn-glycero-3-phospho-(1'-sn-glycerol). A run of 2 helical transmembrane segments spans residues 180–200 and 238–258; these read HPTF…LLLL and IIRT…IFII.

The protein belongs to the Lgt family.

The protein localises to the cell membrane. It carries out the reaction L-cysteinyl-[prolipoprotein] + a 1,2-diacyl-sn-glycero-3-phospho-(1'-sn-glycerol) = an S-1,2-diacyl-sn-glyceryl-L-cysteinyl-[prolipoprotein] + sn-glycerol 1-phosphate + H(+). The protein operates within protein modification; lipoprotein biosynthesis (diacylglyceryl transfer). In terms of biological role, catalyzes the transfer of the diacylglyceryl group from phosphatidylglycerol to the sulfhydryl group of the N-terminal cysteine of a prolipoprotein, the first step in the formation of mature lipoproteins. This chain is Phosphatidylglycerol--prolipoprotein diacylglyceryl transferase, found in Oceanobacillus iheyensis (strain DSM 14371 / CIP 107618 / JCM 11309 / KCTC 3954 / HTE831).